A 231-amino-acid chain; its full sequence is Transmembrane protein 225 (231 aa).

The Cytoplasmic portion of the chain corresponds to 1-13; sequence MMRIPNRSIQAAN. The chain crosses the membrane as a helical span at residues 14-34; it reads IFFSSGAILLLIAGLIMENWV. Topologically, residues 35–71 are extracellular; sequence ELIPKVRKDKVTHSPWLGCCPPFWPEESLEAIRRMMM. Residues 72–92 form a helical membrane-spanning segment; the sequence is MSLNISIYLNLIIGLQFTYMI. The Cytoplasmic segment spans residues 93–99; it reads SQNKCVH. A helical membrane pass occupies residues 100–120; it reads LLIGFLSFFTGCLLFYAIIVY. Topologically, residues 121–139 are extracellular; that stretch reads HHKLNKGQYVYFVNYKTKW. Residues 140-160 traverse the membrane as a helical segment; the sequence is IVFTIYLTIALFLTCGIFSFI. The Cytoplasmic portion of the chain corresponds to 161–231; that stretch reads QCTNRCACMK…LQSRRVTWAL (71 aa). Positions 225 to 229 match the RVxF motif; it reads RRVTW.

As to quaternary structure, interacts (via RVxF motif) with PPP1CC. Expressed in testis, specifically in spermatocytes and round spermatids.

The protein resides in the cytoplasmic vesicle. Its subcellular location is the secretory vesicle. It is found in the acrosome membrane. Functionally, probably inhibits protein phosphatase 1 (PP1) in sperm via binding to catalytic subunit PPP1CC. The sequence is that of Transmembrane protein 225 (Tmem225) from Rattus norvegicus (Rat).